Reading from the N-terminus, the 307-residue chain is Protein TIPIN homolog (307 aa).

Disordered regions lie at residues 1-50 and 252-279; these read MASL…SQDA and ASMDISDYGQPLPPSQPPTPAAKKLSNE. Positions 262-271 are enriched in pro residues; sequence PLPPSQPPTP.

It belongs to the CSM3 family.

It localises to the cytoplasm. Its subcellular location is the nucleus. Required for normal progression of S-phase. Important for cell survival after DNA damage or replication stress. This Drosophila melanogaster (Fruit fly) protein is Protein TIPIN homolog.